Reading from the N-terminus, the 166-residue chain is Protein UTR5 (166 aa).

This Saccharomyces cerevisiae (strain ATCC 204508 / S288c) (Baker's yeast) protein is Protein UTR5 (UTR5).